The chain runs to 202 residues: Ion-translocating oxidoreductase complex subunit G (202 aa).

Residues 11–31 (AILLALIALICTALSTGIYLL) traverse the membrane as a helical segment. Threonine 177 is subject to FMN phosphoryl threonine.

This sequence belongs to the RnfG family. In terms of assembly, the complex is composed of six subunits: RnfA, RnfB, RnfC, RnfD, RnfE and RnfG. FMN serves as cofactor.

Its subcellular location is the cell inner membrane. Its function is as follows. Part of a membrane-bound complex that couples electron transfer with translocation of ions across the membrane. The polypeptide is Ion-translocating oxidoreductase complex subunit G (Pasteurella multocida (strain Pm70)).